The sequence spans 1620 residues: NAD-specific glutamate dehydrogenase (1620 aa).

Residue K851 is part of the active site.

This sequence belongs to the Glu/Leu/Phe/Val dehydrogenases family. Homotetramer. Contains disulfide bonds (interchain).

The enzyme catalyses L-glutamate + NAD(+) + H2O = 2-oxoglutarate + NH4(+) + NADH + H(+). Its activity is regulated as follows. Activity subject to allosteric control by arginine and citrate, which function as positive and negative effectors, respectively. Functionally, involved in arginine catabolism by converting L-glutamate, into 2-oxoglutarate, which is then channeled into the tricarboxylic acid cycle. Can also utilize other amino acids of the glutamate family. This is NAD-specific glutamate dehydrogenase (gdhB) from Pseudomonas aeruginosa (strain ATCC 15692 / DSM 22644 / CIP 104116 / JCM 14847 / LMG 12228 / 1C / PRS 101 / PAO1).